The primary structure comprises 494 residues: Maintenance of mitochondrial morphology protein 1 (494 aa).

Over 1–25 (MGDDQSLRSTVAENDISANLSFTQG) the chain is Lumenal. The chain crosses the membrane as a helical span at residues 26-46 (FLLGQLSVVLLIGAFIKFFIF). Over 47 to 494 (GEAPPPPSRG…GTLPGGAAAN (448 aa)) the chain is Cytoplasmic. 3 disordered regions span residues 53–99 (PSRG…VPSS), 278–330 (PPLH…KSNV), and 395–494 (RTGV…AAAN). A compositionally biased stretch (basic residues) spans 57 to 67 (LSHRASTHRRS). Polar residues-rich tracts occupy residues 68–81 (NSIYTINPNEGTSR) and 88–99 (STSNVLRPVPSS). In terms of domain architecture, SMP-LTD spans 134–387 (QPESLDWFNV…EPRVQVVGLP (254 aa)). Residues 278-290 (PPLHTPSPSPSPP) are compositionally biased toward pro residues. 2 stretches are compositionally biased toward polar residues: residues 300-318 (THPTNGSREPTQEAPNAQE) and 406-415 (TGSNAASRSA). Residues 425–437 (RADDIGREPDGLR) are compositionally biased toward basic and acidic residues.

It belongs to the MMM1 family. Homodimer. Component of the ER-mitochondria encounter structure (ERMES) or MDM complex, composed of mmm1, mdm10, mdm12 and mdm34. A mmm1 homodimer associates with one molecule of mdm12 on each side in a pairwise head-to-tail manner, and the SMP-LTD domains of mmm1 and mdm12 generate a continuous hydrophobic tunnel for phospholipid trafficking.

It localises to the endoplasmic reticulum membrane. Functionally, component of the ERMES/MDM complex, which serves as a molecular tether to connect the endoplasmic reticulum (ER) and mitochondria. Components of this complex are involved in the control of mitochondrial shape and protein biogenesis, and function in nonvesicular lipid trafficking between the ER and mitochondria. The mdm12-mmm1 subcomplex functions in the major beta-barrel assembly pathway that is responsible for biogenesis of all outer membrane beta-barrel proteins, and acts in a late step after the SAM complex. The mdm10-mdm12-mmm1 subcomplex further acts in the TOM40-specific pathway after the action of the mdm12-mmm1 complex. Essential for establishing and maintaining the structure of mitochondria and maintenance of mtDNA nucleoids. The polypeptide is Maintenance of mitochondrial morphology protein 1 (Aspergillus oryzae (strain ATCC 42149 / RIB 40) (Yellow koji mold)).